We begin with the raw amino-acid sequence, 239 residues long: Protein GrpE (239 aa).

2 disordered regions span residues 1–50 (MIEN…INTE) and 209–239 (MGHG…SEDV). The segment covering 16–30 (VLNQDNAPEDNSSAA) has biased composition (polar residues). Acidic residues predominate over residues 218 to 239 (EEVEKDTVEEDIDSEENTSEDV).

It belongs to the GrpE family. Homodimer.

The protein localises to the cytoplasm. In terms of biological role, participates actively in the response to hyperosmotic and heat shock by preventing the aggregation of stress-denatured proteins, in association with DnaK and GrpE. It is the nucleotide exchange factor for DnaK and may function as a thermosensor. Unfolded proteins bind initially to DnaJ; upon interaction with the DnaJ-bound protein, DnaK hydrolyzes its bound ATP, resulting in the formation of a stable complex. GrpE releases ADP from DnaK; ATP binding to DnaK triggers the release of the substrate protein, thus completing the reaction cycle. Several rounds of ATP-dependent interactions between DnaJ, DnaK and GrpE are required for fully efficient folding. The protein is Protein GrpE of Prochlorococcus marinus (strain MIT 9312).